Here is a 1380-residue protein sequence, read N- to C-terminus: Tripeptidyl-peptidase 2 (1380 aa).

In terms of domain architecture, Peptidase S8 spans 110 to 619; the sequence is STFIASLMPK…QGLMQVDKAY (510 aa). Catalysis depends on charge relay system residues Asp-145, His-372, and Ser-558. Positions 1099–1143 are disordered; the sequence is DEKEGKNPKDNPVSYPISYVVPPNKPEEDKKAASAPTCSKSVSER. A compositionally biased stretch (low complexity) spans 1110–1120; it reads PVSYPISYVVP. Coiled-coil stretches lie at residues 1152–1181 and 1238–1300; these read KIKFLGNLKQETEEERSEWRKLCTCLKSEY and EDDE…ELTK.

Belongs to the peptidase S8 family. As to quaternary structure, assembles into a large oligomeric complex containing two related proteins 153 and 142 kDa that are derived from the single TPP2 gene. The 142 kDa form mainly differs from the 153 kDa form by a truncation at the C-terminal end.

The enzyme catalyses Release of an N-terminal tripeptide from a polypeptide.. Its activity is regulated as follows. Inhibited by alanine-alanine-phenylalanine-chloromethylketone, butabindide and phenylmethanesulfonyl fluoride (PMSF), but not by leupeptin, N-ethylmaleimide, EDTA, MG132 and lactacystin. Serine protease of the proteasome pathway that may function with the 20S proteasome to degrade oxidized proteins generated by environmental stress. This Arabidopsis thaliana (Mouse-ear cress) protein is Tripeptidyl-peptidase 2 (TPP2).